We begin with the raw amino-acid sequence, 1116 residues long: uncharacterized protein (1116 aa).

Residues 21–32 (FISRDGGLTWRF) form a BNR 1 repeat. N-linked (GlcNAc...) asparagine glycosylation occurs at Asn35. BNR repeat units lie at residues 67-78 (YYSLDQGRTWNE) and 307-318 (YISHDGGQTIKR). N-linked (GlcNAc...) asparagine glycosylation occurs at Asn336. A BNR 4 repeat occupies 404–415 (YLTKDGGETFTE). Asn553 carries an N-linked (GlcNAc...) asparagine glycan. BNR repeat units lie at residues 607–618 (KITFNDGSDWNF), 686–697 (FLTTDGGETWTE), and 727–738 (SYSTDFGKTWKD). N-linked (GlcNAc...) asparagine glycosylation occurs at Asn846. The helical transmembrane segment at 934 to 957 (INTGAYALVFVTILLVIFFAAWFV) threads the bilayer. A glycan (N-linked (GlcNAc...) asparagine) is linked at Asn985. The tract at residues 1069 to 1116 (IEQEDAYRPEQEHTSQIDQPATSNIPDALPARSAIHKPDSTAVRNEDE) is disordered. Over residues 1073–1083 (DAYRPEQEHTS) the composition is skewed to basic and acidic residues. Residues 1084 to 1093 (QIDQPATSNI) are compositionally biased toward polar residues.

The protein resides in the membrane. This is an uncharacterized protein from Saccharomyces cerevisiae (strain ATCC 204508 / S288c) (Baker's yeast).